Reading from the N-terminus, the 367-residue chain is Heat-inducible transcription repressor HrcA (367 aa).

This sequence belongs to the HrcA family.

Its function is as follows. Negative regulator of class I heat shock genes (grpE-dnaK-dnaJ and groELS operons). Prevents heat-shock induction of these operons. The chain is Heat-inducible transcription repressor HrcA from Acaryochloris marina (strain MBIC 11017).